A 565-amino-acid polypeptide reads, in one-letter code: Glucose starvation modulator protein 1 (565 aa).

The zn(2)-C6 fungal-type DNA-binding region spans 20 to 48 (CVFCHQKHLQCSNERPCKNCVKRNIAHGC). Disordered regions lie at residues 63 to 106 (GVSG…ESSN) and 250 to 269 (QVSP…NTLS). Over residues 82 to 93 (SPLSTSMSPTDS) the composition is skewed to polar residues. Residues 252-269 (SPSPSNTSTSENNTNTLS) show a composition bias toward low complexity.

Belongs to the ERT1/acuK family.

It localises to the nucleus. In terms of biological role, transcription factor which regulates nonfermentable carbon utilization. This Candida dubliniensis (strain CD36 / ATCC MYA-646 / CBS 7987 / NCPF 3949 / NRRL Y-17841) (Yeast) protein is Glucose starvation modulator protein 1 (GSM1).